The chain runs to 473 residues: MTMMDTDEGKTVMCLLTDPEGTHLGSAMYIPQKAGPLQLTQLVNRFLDNEEMLPYSFYVSDEELLVPVGTYLEKNKVSVEKVLTIVYQQQAVFRIRPVNRCSQTIAGHAEAVLCVSFSPDGKQLASGSGDTTVRLWDLYTETPLFTCKGHKNWVLTVAWSPDGKHLVSGSKSGEICCWNPKKGELEGSPLTGHKKWITGISWEPVHLSSPCRRFVTSSKDGDARIWDITLKKSIICLSGHTLAVTCVKWGGDGIIYTGSQDCTIKMWETTQGKLIRELKGHGHWINSLALSTEYVLRTGAFDHTGRQYPPNEEKQKALERYNKTKGDSPERLVSGSDDFTMFLWEPSVSKQPKKRLTGHQQLVNHVYFSPDGKWIASASFDKSVRLWNGITGQFVTVFRGHVGPVYQVSWSADSRLLLSGSKDSTLKIWEIRTKKLKQDLPGHADEVFAVDWSPDGEKVVSGGKDRVLKLWKG.

The ubiquitin-like (UBL) domain stretch occupies residues 9–91 (GKTVMCLLTD…VLTIVYQQQA (83 aa)). 8 WD repeats span residues 107 to 146 (GHAE…PLFT), 149 to 188 (GHKN…LEGS), 192 to 236 (GHKK…SIIC), 239 to 277 (GHTL…LIRE), 313 to 354 (EKQK…QPKK), 358 to 399 (GHQQ…TVFR), 400 to 439 (GHVG…LKQD), and 442 to 473 (GHAD…LWKG). The DWD box signature appears at 417-432 (LLSGSKDSTLKIWEIR).

Belongs to the NLE1/RSA4 family. In terms of assembly, associates with the pre-60S ribosomal particle. In terms of tissue distribution, constitutively and ubiquitously expressed.

The protein resides in the nucleus. It is found in the nucleolus. Required for female gametophyte development. The polypeptide is Notchless protein homolog (Arabidopsis thaliana (Mouse-ear cress)).